A 161-amino-acid polypeptide reads, in one-letter code: Ubiquitin-conjugating enzyme 15 (161 aa).

The 147-residue stretch at 15 to 161 (IACNRLQKEL…TRWWFHDDKV (147 aa)) folds into the UBC core domain. Cys-99 (glycyl thioester intermediate) is an active-site residue.

Belongs to the ubiquitin-conjugating enzyme family.

It catalyses the reaction S-ubiquitinyl-[E1 ubiquitin-activating enzyme]-L-cysteine + [E2 ubiquitin-conjugating enzyme]-L-cysteine = [E1 ubiquitin-activating enzyme]-L-cysteine + S-ubiquitinyl-[E2 ubiquitin-conjugating enzyme]-L-cysteine.. It functions in the pathway protein modification; protein ubiquitination. In terms of biological role, accepts the ubiquitin from the E1 complex and catalyzes its covalent attachment to other proteins. In Arabidopsis thaliana (Mouse-ear cress), this protein is Ubiquitin-conjugating enzyme 15 (UBC15).